A 404-amino-acid chain; its full sequence is Deoxyguanosinetriphosphate triphosphohydrolase-like protein 1 (404 aa).

The 145-residue stretch at 75 to 219 (RLTHSIEVAQ…AAIADDIAYN (145 aa)) folds into the HD domain.

It belongs to the dGTPase family. Type 2 subfamily.

The chain is Deoxyguanosinetriphosphate triphosphohydrolase-like protein 1 from Mesorhizobium japonicum (strain LMG 29417 / CECT 9101 / MAFF 303099) (Mesorhizobium loti (strain MAFF 303099)).